We begin with the raw amino-acid sequence, 156 residues long: Lipoprotein signal peptidase (156 aa).

2 helical membrane-spanning segments follow: residues 57 to 77 (LFLI…LFIN) and 83 to 103 (ILKI…IDRI). Active-site residues include D110 and D129. A helical membrane pass occupies residues 124 to 144 (IFNIADVLVSLGTILLIIFII).

The protein belongs to the peptidase A8 family.

It is found in the cell membrane. It catalyses the reaction Release of signal peptides from bacterial membrane prolipoproteins. Hydrolyzes -Xaa-Yaa-Zaa-|-(S,diacylglyceryl)Cys-, in which Xaa is hydrophobic (preferably Leu), and Yaa (Ala or Ser) and Zaa (Gly or Ala) have small, neutral side chains.. It participates in protein modification; lipoprotein biosynthesis (signal peptide cleavage). This protein specifically catalyzes the removal of signal peptides from prolipoproteins. The sequence is that of Lipoprotein signal peptidase from Clostridium tetani (strain Massachusetts / E88).